Reading from the N-terminus, the 64-residue chain is uncharacterized protein (64 aa).

A run of 2 helical transmembrane segments spans residues 4–24 and 35–55; these read IYQYFSLLSFTFSLYFGWLAY and MYLNVSYCALFLSVMVFTFGM.

The protein localises to the cell membrane. This is an uncharacterized protein from Bacillus subtilis (strain 168).